An 83-amino-acid chain; its full sequence is Small ribosomal subunit protein eS21 (83 aa).

The protein belongs to the eukaryotic ribosomal protein eS21 family. Component of the 40S small ribosomal subunit.

It is found in the cytoplasm. The protein localises to the cytosol. Its subcellular location is the rough endoplasmic reticulum. The protein is Small ribosomal subunit protein eS21 (RpS21) of Spodoptera frugiperda (Fall armyworm).